Here is a 339-residue protein sequence, read N- to C-terminus: Riboflavin biosynthesis protein RibD (339 aa).

The deaminase stretch occupies residues 1-152 (MNVEQVKSID…REWLHKQRTG (152 aa)). Residues 7-129 (KSIDEAMGLA…RLSAAGLQVR (123 aa)) form the CMP/dCMP-type deaminase domain. Residue histidine 57 participates in Zn(2+) binding. The Proton donor role is filled by glutamate 59. Zn(2+)-binding residues include cysteine 82 and cysteine 91. The interval 153 to 339 (LPHVTWKYAT…PDLLLSLVAR (187 aa)) is reductase. Residues alanine 161 and 168–171 (SAAA) each bind NADP(+). Serine 175 serves as a coordination point for substrate. Tryptophan 177 is an NADP(+) binding site. Arginine 191 provides a ligand contact to substrate. NADP(+) is bound by residues threonine 203 and aspartate 207. Substrate is bound by residues leucine 211, arginine 214, and glutamate 272. 274–280 (GPTLAGA) lines the NADP(+) pocket.

The protein in the N-terminal section; belongs to the cytidine and deoxycytidylate deaminase family. This sequence in the C-terminal section; belongs to the HTP reductase family. It depends on Zn(2+) as a cofactor.

It catalyses the reaction 2,5-diamino-6-hydroxy-4-(5-phosphoribosylamino)-pyrimidine + H2O + H(+) = 5-amino-6-(5-phospho-D-ribosylamino)uracil + NH4(+). The enzyme catalyses 5-amino-6-(5-phospho-D-ribitylamino)uracil + NADP(+) = 5-amino-6-(5-phospho-D-ribosylamino)uracil + NADPH + H(+). It participates in cofactor biosynthesis; riboflavin biosynthesis; 5-amino-6-(D-ribitylamino)uracil from GTP: step 2/4. It functions in the pathway cofactor biosynthesis; riboflavin biosynthesis; 5-amino-6-(D-ribitylamino)uracil from GTP: step 3/4. Its function is as follows. Converts 2,5-diamino-6-(ribosylamino)-4(3h)-pyrimidinone 5'-phosphate into 5-amino-6-(ribosylamino)-2,4(1h,3h)-pyrimidinedione 5'-phosphate. In Mycobacterium tuberculosis (strain CDC 1551 / Oshkosh), this protein is Riboflavin biosynthesis protein RibD (ribD).